Consider the following 493-residue polypeptide: Lysine--tRNA ligase (493 aa).

Residues E402 and E409 each coordinate Mg(2+).

The protein belongs to the class-II aminoacyl-tRNA synthetase family. In terms of assembly, homodimer. Requires Mg(2+) as cofactor.

It localises to the cytoplasm. The catalysed reaction is tRNA(Lys) + L-lysine + ATP = L-lysyl-tRNA(Lys) + AMP + diphosphate. The protein is Lysine--tRNA ligase of Ureaplasma parvum serovar 3 (strain ATCC 27815 / 27 / NCTC 11736).